We begin with the raw amino-acid sequence, 72 residues long: Translation initiation factor IF-1 2 (72 aa).

Residues 1–72 enclose the S1-like domain; the sequence is MAKDDVIQMQ…SRARIVFRTK (72 aa).

This sequence belongs to the IF-1 family. Component of the 30S ribosomal translation pre-initiation complex which assembles on the 30S ribosome in the order IF-2 and IF-3, IF-1 and N-formylmethionyl-tRNA(fMet); mRNA recruitment can occur at any time during PIC assembly.

The protein localises to the cytoplasm. In terms of biological role, one of the essential components for the initiation of protein synthesis. Stabilizes the binding of IF-2 and IF-3 on the 30S subunit to which N-formylmethionyl-tRNA(fMet) subsequently binds. Helps modulate mRNA selection, yielding the 30S pre-initiation complex (PIC). Upon addition of the 50S ribosomal subunit IF-1, IF-2 and IF-3 are released leaving the mature 70S translation initiation complex. The polypeptide is Translation initiation factor IF-1 2 (Cupriavidus necator (strain ATCC 17699 / DSM 428 / KCTC 22496 / NCIMB 10442 / H16 / Stanier 337) (Ralstonia eutropha)).